Reading from the N-terminus, the 64-residue chain is Beta-insect depressant toxin BmKIT4 (64 aa).

The region spanning 1-61 (DGYIRGSNGC…TWKSESNTCG (61 aa)) is the LCN-type CS-alpha/beta domain. Disulfide bonds link cysteine 10–cysteine 60, cysteine 14–cysteine 35, cysteine 21–cysteine 42, and cysteine 25–cysteine 44. Cysteine 60 carries the cysteine amide modification.

The protein belongs to the long (4 C-C) scorpion toxin superfamily. Sodium channel inhibitor family. Beta subfamily. As to expression, expressed by the venom gland.

It localises to the secreted. Its function is as follows. Depressant insect beta-toxins cause a transient contraction paralysis followed by a slow flaccid paralysis. They bind voltage-independently at site-4 of sodium channels (Nav) and shift the voltage of activation toward more negative potentials thereby affecting sodium channel activation and promoting spontaneous and repetitive firing. This toxin is active only on insects. The sequence is that of Beta-insect depressant toxin BmKIT4 from Olivierus martensii (Manchurian scorpion).